Consider the following 274-residue polypeptide: Sulfur carrier protein FdhD (274 aa).

Cys-120 functions as the Cysteine persulfide intermediate in the catalytic mechanism.

This sequence belongs to the FdhD family.

The protein localises to the cytoplasm. Functionally, required for formate dehydrogenase (FDH) activity. Acts as a sulfur carrier protein that transfers sulfur from IscS to the molybdenum cofactor prior to its insertion into FDH. The polypeptide is Sulfur carrier protein FdhD (Burkholderia mallei (strain ATCC 23344)).